Reading from the N-terminus, the 300-residue chain is 4-diphosphocytidyl-2-C-methyl-D-erythritol kinase (300 aa).

Lys12 is a catalytic residue. Pro94–Ser104 contributes to the ATP binding site. Asp136 is an active-site residue.

Belongs to the GHMP kinase family. IspE subfamily.

The catalysed reaction is 4-CDP-2-C-methyl-D-erythritol + ATP = 4-CDP-2-C-methyl-D-erythritol 2-phosphate + ADP + H(+). It functions in the pathway isoprenoid biosynthesis; isopentenyl diphosphate biosynthesis via DXP pathway; isopentenyl diphosphate from 1-deoxy-D-xylulose 5-phosphate: step 3/6. Its function is as follows. Catalyzes the phosphorylation of the position 2 hydroxy group of 4-diphosphocytidyl-2C-methyl-D-erythritol. The chain is 4-diphosphocytidyl-2-C-methyl-D-erythritol kinase from Verminephrobacter eiseniae (strain EF01-2).